Here is a 419-residue protein sequence, read N- to C-terminus: MAGDSRNAMNQDMEIGVTPWDPKKIPKQARDYVPIATDRTRLLAEGKKPRQRYMEKSGKCNVHHGNVQETYRYLSDLFTTLVDLKWRFNLLVFTMVYTVTWLFFGFIWWLIAYIRGDLDHVGDQEWIPCVENLSGFVSAFLFSIETETTIGYGFRVITEKCPEGIILLLVQAILGSIVNAFMVGCMFVKISQPKKRAETLMFSNNAVISMRDEKLCLMFRVGDLRNSHIVEASIRAKLIKSRQTKEGEFIPLNQTDINVGFDTGDDRLFLVSPLIISHEINQKSPFWEMSQAQLHQEEFEVVVILEGMVEATGMTCQARSSYMDTEVLWGHRFTPVLTLEKGFYEVDYNTFHDTYETNTPSCCAKELAEMKREGRLLQYLPSPPLLGGCAEAGLDAEAEQNEEDEPKGLGGSREARGSV.

Residues 1–86 (MAGDSRNAMN…LFTTLVDLKW (86 aa)) are Cytoplasmic-facing. Position 5 is a phosphoserine (Ser-5). Residues 87-111 (RFNLLVFTMVYTVTWLFFGFIWWLI) traverse the membrane as a helical segment. At 112-135 (AYIRGDLDHVGDQEWIPCVENLSG) the chain is on the extracellular side. An intramembrane region (helical; Pore-forming) is located at residues 136–147 (FVSAFLFSIETE). Residues 148 to 154 (TTIGYGF) constitute an intramembrane region (pore-forming). Residues 149-154 (TIGYGF) carry the Selectivity filter motif. At 155-163 (RVITEKCPE) the chain is on the extracellular side. Residues 164-185 (GIILLLVQAILGSIVNAFMVGC) form a helical membrane-spanning segment. The Cytoplasmic portion of the chain corresponds to 186 to 419 (MFVKISQPKK…GGSREARGSV (234 aa)). Residues 390 to 419 (AEAGLDAEAEQNEEDEPKGLGGSREARGSV) are disordered. A compositionally biased stretch (acidic residues) spans 394-405 (LDAEAEQNEEDE).

Belongs to the inward rectifier-type potassium channel (TC 1.A.2.1) family. KCNJ5 subfamily. In terms of assembly, associates with KCNJ3/GIRK1 to form a G-protein-activated heteromultimer pore-forming unit. The resulting inward current is much larger. Associates with KCNJ6/GIRK2 to form a G-protein-activated heteromultimer pore-forming unit. In terms of tissue distribution, islets, exocrine pancreas and heart. Expressed in the adrenal cortex, particularly the zona glomerulosa.

It localises to the membrane. The enzyme catalyses K(+)(in) = K(+)(out). With respect to regulation, heteromultimer composed of KCNJ3/GIRK1 and KCNJ5/GIRK4 is activated by phosphatidylinositol 4,5 biphosphate (PtdIns(4,5)P2). Functionally, inward rectifier potassium channels are characterized by a greater tendency to allow potassium to flow into the cell rather than out of it. Their voltage dependence is regulated by the concentration of extracellular potassium; as external potassium is raised, the voltage range of the channel opening shifts to more positive voltages. The inward rectification is mainly due to the blockage of outward current by internal magnesium. Can be blocked by external barium. This potassium channel is controlled by G proteins. The protein is G protein-activated inward rectifier potassium channel 4 (KCNJ5) of Homo sapiens (Human).